We begin with the raw amino-acid sequence, 867 residues long: Putative tyrosine-protein kinase F09A5.2 (867 aa).

A run of 2 helical transmembrane segments spans residues 45–65 (VMKI…FATS) and 355–375 (LLLI…AFFV). Asn395 and Asn423 each carry an N-linked (GlcNAc...) asparagine glycan. The Protein kinase domain maps to 467 to 757 (VQEDHLLGNG…FNEMRGEITV (291 aa)). 473-481 (LGNGAFANV) lines the ATP pocket. Asn496 and Asn500 each carry an N-linked (GlcNAc...) asparagine glycan. Lys516 contributes to the ATP binding site. An N-linked (GlcNAc...) asparagine glycan is attached at Asn585. The active-site Proton acceptor is the Asp626. Disordered regions lie at residues 782-821 (LTMQ…GTCA) and 848-867 (SKSM…TYQS). Residues 801–810 (DMDEDGDYDS) are compositionally biased toward acidic residues. The segment covering 858–867 (SNSTVSTYQS) has biased composition (polar residues). The N-linked (GlcNAc...) asparagine glycan is linked to Asn859.

It belongs to the protein kinase superfamily. Tyr protein kinase family.

It localises to the membrane. The enzyme catalyses L-tyrosyl-[protein] + ATP = O-phospho-L-tyrosyl-[protein] + ADP + H(+). The chain is Putative tyrosine-protein kinase F09A5.2 from Caenorhabditis elegans.